Here is a 437-residue protein sequence, read N- to C-terminus: Phosphoglucosamine mutase (437 aa).

The Phosphoserine intermediate role is filled by Ser-101. Residues Ser-101, Asp-234, Asp-236, and Asp-238 each coordinate Mg(2+). The residue at position 101 (Ser-101) is a Phosphoserine.

It belongs to the phosphohexose mutase family. It depends on Mg(2+) as a cofactor. Post-translationally, activated by phosphorylation.

It carries out the reaction alpha-D-glucosamine 1-phosphate = D-glucosamine 6-phosphate. Functionally, catalyzes the conversion of glucosamine-6-phosphate to glucosamine-1-phosphate. This is Phosphoglucosamine mutase from Thermus thermophilus (strain ATCC 27634 / DSM 579 / HB8).